A 91-amino-acid polypeptide reads, in one-letter code: RNA-binding protein Hfq (91 aa).

Positions 9–68 constitute a Sm domain; the sequence is DPFLNALRRERVPVSIYLVNGIKLQGQVESFDQFVILLKNTVSQMVYKHAISTVVPSRPF. The tract at residues 66 to 91 is disordered; that stretch reads RPFNVGSHQGGSSNYNAQQDDSAGEQ. The span at 71 to 91 shows a compositional bias: polar residues; sequence GSHQGGSSNYNAQQDDSAGEQ.

This sequence belongs to the Hfq family. Homohexamer.

RNA chaperone that binds small regulatory RNA (sRNAs) and mRNAs to facilitate mRNA translational regulation in response to envelope stress, environmental stress and changes in metabolite concentrations. Also binds with high specificity to tRNAs. The polypeptide is RNA-binding protein Hfq (Shewanella amazonensis (strain ATCC BAA-1098 / SB2B)).